The chain runs to 205 residues: Holliday junction branch migration complex subunit RuvA (205 aa).

Positions 1 to 64 (MIGKLKGVID…EDMIRLYGFA (64 aa)) are domain I. The interval 65-143 (NQLEREWFRL…AFAGDASGTI (79 aa)) is domain II. The tract at residues 144 to 152 (GLKQELGAG) is flexible linker. A domain III region spans residues 153-205 (AAPAPVADAVSALSNLGYSRDQAANAVAAALKEAGENADSAKLIRLGLKELSR).

The protein belongs to the RuvA family. In terms of assembly, homotetramer. Forms an RuvA(8)-RuvB(12)-Holliday junction (HJ) complex. HJ DNA is sandwiched between 2 RuvA tetramers; dsDNA enters through RuvA and exits via RuvB. An RuvB hexamer assembles on each DNA strand where it exits the tetramer. Each RuvB hexamer is contacted by two RuvA subunits (via domain III) on 2 adjacent RuvB subunits; this complex drives branch migration. In the full resolvosome a probable DNA-RuvA(4)-RuvB(12)-RuvC(2) complex forms which resolves the HJ.

Its subcellular location is the cytoplasm. In terms of biological role, the RuvA-RuvB-RuvC complex processes Holliday junction (HJ) DNA during genetic recombination and DNA repair, while the RuvA-RuvB complex plays an important role in the rescue of blocked DNA replication forks via replication fork reversal (RFR). RuvA specifically binds to HJ cruciform DNA, conferring on it an open structure. The RuvB hexamer acts as an ATP-dependent pump, pulling dsDNA into and through the RuvAB complex. HJ branch migration allows RuvC to scan DNA until it finds its consensus sequence, where it cleaves and resolves the cruciform DNA. The protein is Holliday junction branch migration complex subunit RuvA of Brucella anthropi (strain ATCC 49188 / DSM 6882 / CCUG 24695 / JCM 21032 / LMG 3331 / NBRC 15819 / NCTC 12168 / Alc 37) (Ochrobactrum anthropi).